The chain runs to 378 residues: C-X-C chemokine receptor type 3-2 (378 aa).

Over 1 to 47 (MDNSTTAAEVSAPTDYDYNSTSYDDDNPYAAPCSLTETWNFLGRFAP) the chain is Extracellular. N-linked (GlcNAc...) asparagine glycosylation is found at N3 and N19. Residues 48 to 68 (VAYILVFILALVGNILVLCVI) form a helical membrane-spanning segment. Over 69-86 (RRYRQSRHSPCSFSLTDT) the chain is Cytoplasmic. The chain crosses the membrane as a helical span at residues 87 to 107 (FLLHLAVSDLLLAATLPFFAV). Residues 108-121 (EWISEWVFGKVMCK) are Extracellular-facing. C120 and C199 are disulfide-bonded. A helical membrane pass occupies residues 122 to 142 (ITGALFSLNVYCGVLFLACIS). At 143–164 (FDRYLAIVHAINISWRRKTCHA) the chain is on the cytoplasmic side. Residues 165–185 (QLACAFIWVICLGLSMVDMHF) form a helical membrane-spanning segment. The Extracellular segment spans residues 186 to 212 (RDLVEIPGMNRMVCQIVYSEQYSKQWQ). A helical membrane pass occupies residues 213 to 233 (IGMQLVSMVLGFILPLLVMLY). The Cytoplasmic segment spans residues 234-253 (CYLHIFKALCHATRRQKRRS). Residues 254–274 (LRLIISLVIVFVISWAPYNAL) form a helical membrane-spanning segment. Over 275–304 (RMTDSLQMLGVIVKSCALNNVLDVGILVTE) the chain is Extracellular. A helical membrane pass occupies residues 305 to 325 (SLGLAHCALNPLLYGLVGVKF). Residues 326 to 378 (RRELAQMCKAALGPQGCLGLVGWANGRGSSTRRPTGSFSSVETENTSYFSVMA) lie on the Cytoplasmic side of the membrane.

The protein belongs to the G-protein coupled receptor 1 family.

The protein localises to the cell membrane. Receptor for the C-X-C chemokines cxcl11.1 and cxcl11.6. Promotes macrophage chemotaxis to sites of bacterial infection. The sequence is that of C-X-C chemokine receptor type 3-2 from Danio rerio (Zebrafish).